The primary structure comprises 439 residues: Tol-Pal system protein TolB (439 aa).

Residues 1-22 (MKKPLRWLAALTVLLLPLSALA) form the signal peptide.

This sequence belongs to the TolB family. The Tol-Pal system is composed of five core proteins: the inner membrane proteins TolA, TolQ and TolR, the periplasmic protein TolB and the outer membrane protein Pal. They form a network linking the inner and outer membranes and the peptidoglycan layer.

The protein localises to the periplasm. In terms of biological role, part of the Tol-Pal system, which plays a role in outer membrane invagination during cell division and is important for maintaining outer membrane integrity. In Xanthomonas oryzae pv. oryzae (strain KACC10331 / KXO85), this protein is Tol-Pal system protein TolB.